Consider the following 85-residue polypeptide: Toxin BmKITc (85 aa).

An N-terminal signal peptide occupies residues 1 to 21; sequence MKLFLLLVIFASMLNDGLVNA. The 61-residue stretch at 22–82 folds into the LCN-type CS-alpha/beta domain; that stretch reads DGYIRGSDGC…KWKYESNTCG (61 aa). 4 cysteine pairs are disulfide-bonded: C31/C81, C35/C56, C42/C63, and C46/C65.

This sequence belongs to the long (4 C-C) scorpion toxin superfamily. Sodium channel inhibitor family. Beta subfamily. In terms of tissue distribution, expressed by the venom gland.

It localises to the secreted. In terms of biological role, depressant insect beta-toxins cause a transient contraction paralysis followed by a slow flaccid paralysis. They bind voltage-independently at site-4 of sodium channels (Nav) and shift the voltage of activation toward more negative potentials thereby affecting sodium channel activation and promoting spontaneous and repetitive firing. The protein is Toxin BmKITc of Olivierus martensii (Manchurian scorpion).